Consider the following 697-residue polypeptide: Elongation factor G 1 (697 aa).

The region spanning 8–283 is the tr-type G domain; the sequence is ERYRNFGIMA…AVVDFLPSPV (276 aa). GTP contacts are provided by residues 17-24, 81-85, and 135-138; these read AHIDAGKT, DTPGH, and NKMD.

This sequence belongs to the TRAFAC class translation factor GTPase superfamily. Classic translation factor GTPase family. EF-G/EF-2 subfamily.

The protein resides in the cytoplasm. Functionally, catalyzes the GTP-dependent ribosomal translocation step during translation elongation. During this step, the ribosome changes from the pre-translocational (PRE) to the post-translocational (POST) state as the newly formed A-site-bound peptidyl-tRNA and P-site-bound deacylated tRNA move to the P and E sites, respectively. Catalyzes the coordinated movement of the two tRNA molecules, the mRNA and conformational changes in the ribosome. In Anaeromyxobacter dehalogenans (strain 2CP-C), this protein is Elongation factor G 1.